The following is a 366-amino-acid chain: Cyclic amide hydrolase (366 aa).

The segment at 1–103 is RU A; it reads MKVGVHKLAM…TLFTRAPDDG (103 aa). Substrate is bound by residues arginine 51 and 82–83; that span reads SG. The RU B stretch occupies residues 110–247; sequence RLALGIGITR…CEVLLFGNAP (138 aa). Lysine 160 is an active-site residue. Residues arginine 192, 230 to 231, arginine 327, and 346 to 347 contribute to the substrate site; these read SA and SG. Serine 230 acts as the Nucleophile in catalysis. Residues 253–366 are RU C; sequence FRIGHGVLKD…AAPIAAIVRA (114 aa).

Belongs to the cyclic amide hydrolase (CyAH) family. In terms of assembly, homotetramer.

Functionally, cyclic amide hydrolase of unknown substrate specificity. Catalyzes the hydrolytic ring-opening of a cyclic amide. Does not act on cyanuric acid nor barbituric acid. The protein is Cyclic amide hydrolase of Azorhizobium caulinodans (strain ATCC 43989 / DSM 5975 / JCM 20966 / LMG 6465 / NBRC 14845 / NCIMB 13405 / ORS 571).